The chain runs to 57 residues: Large ribosomal subunit protein bL32c (57 aa).

A disordered region spans residues 1–21; it reads MAVPKKRTSKSKKNLRKNTWK.

This sequence belongs to the bacterial ribosomal protein bL32 family.

It localises to the plastid. It is found in the chloroplast. This chain is Large ribosomal subunit protein bL32c, found in Stigeoclonium helveticum (Green alga).